The following is a 296-amino-acid chain: Claudin-23 (296 aa).

The Cytoplasmic segment spans residues 1–2 (MR). Residues 3–23 (TPVVMTLGMVLTPCGLLLNLV) form a helical membrane-spanning segment. At 24–81 (STLAPGWRLVKGFLDQPVDVVLYQGLWDICREQSSRERECGQPDEWNYFQTQPVQVAR) the chain is on the extracellular side. The helical transmembrane segment at 82–102 (GLMITSLATTALGLLLASLGV) threads the bilayer. The Cytoplasmic segment spans residues 103-111 (RCWQDEPHY). A helical membrane pass occupies residues 112 to 132 (GLAGLSGVVFFVAGLFSLIPV). At 133 to 160 (SWYNHFLSDPDVLAAPSSPVTVQVSYSL) the chain is on the extracellular side. The helical transmembrane segment at 161–181 (VLGYLGSCLLLLGGFSLALSF) threads the bilayer. Residues 182-296 (APWCEERCRR…QNSLPCDSDL (115 aa)) lie on the Cytoplasmic side of the membrane. The disordered stretch occupies residues 224–296 (YSDGQHRPPP…QNSLPCDSDL (73 aa)). A compositionally biased stretch (low complexity) spans 273 to 284 (TSQGGSSSRSTR). The segment covering 285-296 (PCQNSLPCDSDL) has biased composition (polar residues).

It belongs to the claudin family.

Its subcellular location is the cell junction. It localises to the tight junction. The protein resides in the cell membrane. Plays a major role in tight junction-specific obliteration of the intercellular space, through calcium-independent cell-adhesion activity. This Mus musculus (Mouse) protein is Claudin-23 (Cldn23).